A 441-amino-acid polypeptide reads, in one-letter code: Trigger factor (441 aa).

Positions 175–260 (GDKVVIDYNS…LVSIMVPKDV (86 aa)) constitute a PPIase FKBP-type domain.

Belongs to the FKBP-type PPIase family. Tig subfamily.

The protein resides in the cytoplasm. It carries out the reaction [protein]-peptidylproline (omega=180) = [protein]-peptidylproline (omega=0). In terms of biological role, involved in protein export. Acts as a chaperone by maintaining the newly synthesized protein in an open conformation. Functions as a peptidyl-prolyl cis-trans isomerase. This is Trigger factor from Anaplasma marginale (strain St. Maries).